The following is a 61-amino-acid chain: DNA-binding protein 7a (61 aa).

Positions 37–61 (NGKTGRGAVSEKDAPKELLEKLEKK) are disordered. Residues 45-61 (VSEKDAPKELLEKLEKK) are compositionally biased toward basic and acidic residues.

This sequence belongs to the 7 kDa DNA-binding/endoribonuclease P2 family. In terms of assembly, monomer.

Its subcellular location is the cytoplasm. Functionally, can constrain negative DNA supercoils. May be involved in maintaining the integrity of the genome at high temperature. This is DNA-binding protein 7a from Acidianus hospitalis (strain W1).